Consider the following 200-residue polypeptide: Interleukin 17-like protein (200 aa).

Positions 1-26 are cleaved as a signal peptide; that stretch reads MGNFFLFAMTLVVCSVIVLLTGVADS. Residue Asn46 is glycosylated (N-linked (GlcNAc...) asparagine). Cystine bridges form between Cys122–Cys175 and Cys127–Cys177. The N-linked (GlcNAc...) asparagine glycan is linked to Asn192.

The protein belongs to the IL-17 family. As to expression, expressed in several tissues including hemocytes, gills, mantle, adductor muscle, labial palps, digestive glands and heart with highest levels in gills and lowest levels in adductor muscle and heart.

It localises to the secreted. This chain is Interleukin 17-like protein, found in Magallana gigas (Pacific oyster).